The chain runs to 350 residues: 8-amino-7-oxononanoate synthase (350 aa).

77–78 (GY) lines the pyridoxal 5'-phosphate pocket. A substrate-binding site is contributed by His102. Residues Ser150, 175 to 178 (DDAH), and 204 to 207 (TLSK) each bind pyridoxal 5'-phosphate. An N6-(pyridoxal phosphate)lysine modification is found at Lys207. Residue Thr316 coordinates substrate.

The protein belongs to the class-II pyridoxal-phosphate-dependent aminotransferase family. BioF subfamily. As to quaternary structure, homodimer. It depends on pyridoxal 5'-phosphate as a cofactor.

The enzyme catalyses 6-carboxyhexanoyl-[ACP] + L-alanine + H(+) = (8S)-8-amino-7-oxononanoate + holo-[ACP] + CO2. It participates in cofactor biosynthesis; biotin biosynthesis. In terms of biological role, catalyzes the decarboxylative condensation of pimeloyl-[acyl-carrier protein] and L-alanine to produce 8-amino-7-oxononanoate (AON), [acyl-carrier protein], and carbon dioxide. The sequence is that of 8-amino-7-oxononanoate synthase from Methylocella silvestris (strain DSM 15510 / CIP 108128 / LMG 27833 / NCIMB 13906 / BL2).